The chain runs to 352 residues: [LysW]-L-2-aminoadipate/[LysW]-L-glutamate phosphate reductase (352 aa).

Residue 13–16 (SGYT) participates in NADP(+) binding. The active site involves Cys153. NADP(+) is bound at residue Asn319.

It belongs to the NAGSA dehydrogenase family. Type 1 subfamily. LysY sub-subfamily.

The protein resides in the cytoplasm. The catalysed reaction is [amino-group carrier protein]-C-terminal-N-(1-carboxy-5-oxopentan-1-yl)-L-glutamine + phosphate + NADP(+) = [amino-group carrier protein]-C-terminal-N-(1-carboxy-5-phosphooxy-5-oxopentan-1-yl)-L-glutamine + NADPH + H(+). It carries out the reaction [amino-group carrier protein]-C-terminal-gamma-(L-glutamyl-5-semialdehyde)-L-glutamate + phosphate + NADP(+) = [amino-group carrier protein]-C-terminal-gamma-(5-phospho-L-glutamyl)-L-glutamate + NADPH + H(+). The protein operates within amino-acid biosynthesis; L-lysine biosynthesis via AAA pathway; L-lysine from L-alpha-aminoadipate (Thermus route): step 3/5. It participates in amino-acid biosynthesis; L-arginine biosynthesis. Its function is as follows. Involved in both the arginine and lysine biosynthetic pathways. The sequence is that of [LysW]-L-2-aminoadipate/[LysW]-L-glutamate phosphate reductase from Saccharolobus solfataricus (strain ATCC 35092 / DSM 1617 / JCM 11322 / P2) (Sulfolobus solfataricus).